A 270-amino-acid polypeptide reads, in one-letter code: UPF0354 protein BC_4690 (270 aa).

This sequence belongs to the UPF0354 family.

The polypeptide is UPF0354 protein BC_4690 (Bacillus cereus (strain ATCC 14579 / DSM 31 / CCUG 7414 / JCM 2152 / NBRC 15305 / NCIMB 9373 / NCTC 2599 / NRRL B-3711)).